The following is an 84-amino-acid chain: Peptide Ctry2346 (84 aa).

An N-terminal signal peptide occupies residues 1 to 23; the sequence is MKTQTLLFTFSLVLLMVATQTEA. A Leucine amide modification is found at L33. Residues 37 to 84 constitute a propeptide that is removed on maturation; it reads GLLDNLLGKRGLLFGKRALTNQDLFDLAYDPSLSAADMDALEMLLENY.

It belongs to the non-disulfide-bridged peptide (NDBP) superfamily. Short antimicrobial peptide (group 4) family. Expressed by the venom gland.

The protein localises to the secreted. The protein resides in the target cell membrane. In terms of biological role, antimicrobial peptide. This Chaerilus tryznai (Scorpion) protein is Peptide Ctry2346.